The primary structure comprises 152 residues: Ninjurin-1 (152 aa).

Methionine 1 is subject to N-acetylmethionine. Residues 1–26 (MDSGTEEYELNGGLPPGTPGSPDASP) form a disordered region. The Extracellular portion of the chain corresponds to 1 to 78 (MDSGTEEYEL…EQGPSFAFYV (78 aa)). A phosphoserine mark is found at serine 21 and serine 25. Residues 26–37 (PARWGWRHGPIN) are N-terminal adhesion motif. A required to induce plasma membrane rupture region spans residues 40–69 (HYASKKSAAESMLDIALLMANASQLKAVVE). The interval 44 to 55 (KKSAAESMLDIA) is helix alpha1. Residues 58-74 (MANASQLKAVVEQGPSF) form a helix alpha2 region. A glycan (N-linked (GlcNAc...) asparagine) is linked at asparagine 60. The chain crosses the membrane as a helical span at residues 79–103 (PLVVLISISLVLQIGVGVLLIFLVK). The Cytoplasmic portion of the chain corresponds to 104–113 (YDLNNPAKHA). A helical membrane pass occupies residues 114–138 (KLDFLNNLATGLVFIIVVVNIFITA). At 139–152 (FGVQKPLMDMAPQQ) the chain is on the extracellular side.

Belongs to the ninjurin family. In terms of assembly, homodimer; in absence of death stimuli, forms an inactive homodimer. Homooligomer; in response to death stimuli, homooligomerizes into long, highly branched filaments and large, ring-shaped structures in the membrane. Cleaved by MMP9 protease to generate the Secreted ninjurin-1 form. In terms of processing, N-linked glycosylation is required for homooligomerization. In terms of tissue distribution, widely expressed in both adult and embryonic tissues, primarily those of epithelial origin.

Its subcellular location is the cell membrane. It is found in the synaptic cell membrane. It localises to the secreted. Its activity is regulated as follows. In response to death stimuli, homooligomerizes and disrupts membrane integrity by introducing the hydrophilic faces of alpha1 and alpha2 helices into the hydrophobic membrane. Homooligomerization and ability to mediate plasma membrane rupture is inhibited by glycine; it is unclear whether glycine directly or indirectly inhibits homooligomerization. In normal conditions, NINJ1 is autoinhibited via formation of a homodimer: in the inactive homodimer, the alpha1 and alpha2 helices (residues 44-74) form a single transmembrane region without a kink, in which hydrophilic faces of alpha1 and alpha2 helices are sequestered. Effector of various programmed cell death, such as pyroptosis and necroptosis, which mediates plasma membrane rupture (cytolysis). Oligomerizes in response to death stimuli and forms ring-like structures on the plasma membrane: acts by cutting and shedding membrane disks, like a cookie cutter, leading to membrane damage and loss that cannot be repaired by the cell. Plasma membrane rupture leads to release intracellular molecules named damage-associated molecular patterns (DAMPs) that propagate the inflammatory response. Mechanistically, mediates plasma membrane rupture by introducing hydrophilic faces of 2 alpha helices into the hydrophobic membrane. Induces plasma membrane rupture downstream of Gasdermin (GSDMA, GSDMB, GSDMC, GSDMD, or GSDME) or MLKL during pyroptosis or necroptosis, respectively. Acts as an effector of PANoptosis downstream of CASP1, CASP4, CASP8 and RIPK3. Also induces plasma membrane rupture in response to cell swelling caused by osmotic stress and ferroptosis downstream of lipid peroxidation. Acts as a regulator of Toll-like receptor 4 (TLR4) signaling triggered by lipopolysaccharide (LPS) during systemic inflammation; directly binds LPS. Involved in leukocyte migration during inflammation by promoting transendothelial migration of macrophages via homotypic binding. Promotes the migration of monocytes across the brain endothelium to central nervous system inflammatory lesions. Also acts as a homophilic transmembrane adhesion molecule involved in various processes such as axonal growth, cell chemotaxis and angiogenesis. Promotes cell adhesion by mediating homophilic interactions via its extracellular N-terminal adhesion motif (N-NAM). Involved in the progression of the inflammatory stress by promoting cell-to-cell interactions between immune cells and endothelial cells. Plays a role in nerve regeneration by promoting maturation of Schwann cells. Acts as a regulator of angiogenesis. Promotes the formation of new vessels by mediating the interaction between capillary pericyte cells and endothelial cells. Promotes osteoclasts development by enhancing the survival of prefusion osteoclasts. Also involved in striated muscle growth and differentiation. Its function is as follows. Secreted form generated by cleavage, which has chemotactic activity. Acts as an anti-inflammatory mediator by promoting monocyte recruitment, thereby ameliorating atherosclerosis. The sequence is that of Ninjurin-1 from Homo sapiens (Human).